A 429-amino-acid polypeptide reads, in one-letter code: Dihydroorotase (429 aa).

Zn(2+) is bound by residues His-61 and His-63. Substrate-binding positions include 63 to 65 (HYR) and Asn-95. Zn(2+) contacts are provided by Asp-153, His-180, and His-233. Asn-279 provides a ligand contact to substrate. Asp-306 is a binding site for Zn(2+). Residue Asp-306 is part of the active site. Substrate is bound by residues His-310 and 324 to 325 (FG).

This sequence belongs to the metallo-dependent hydrolases superfamily. DHOase family. Class I DHOase subfamily. The cofactor is Zn(2+).

It catalyses the reaction (S)-dihydroorotate + H2O = N-carbamoyl-L-aspartate + H(+). It functions in the pathway pyrimidine metabolism; UMP biosynthesis via de novo pathway; (S)-dihydroorotate from bicarbonate: step 3/3. Catalyzes the reversible cyclization of carbamoyl aspartate to dihydroorotate. This Ligilactobacillus salivarius (strain UCC118) (Lactobacillus salivarius) protein is Dihydroorotase.